Reading from the N-terminus, the 500-residue chain is Protein farnesyltransferase subunit beta (500 aa).

A disordered region spans residues 117-140 (LQNDDNNGNNNNRENNQNGGGFGG). Low complexity predominate over residues 119–133 (NDDNNGNNNNRENNQ). PFTB repeat units lie at residues 121–162 (DNNG…YVIG), 172–213 (REAM…SMLN), 220–261 (ERGV…SILN), 268–309 (MNSL…IIIQ), and 343–384 (QEYV…SLSQ). (2E,6E)-farnesyl diphosphate is bound by residues 246–249 (HGGY) and 288–291 (RTNK). Residues aspartate 294 and cysteine 296 each coordinate Zn(2+). Residue 297–300 (YSYW) coordinates (2E,6E)-farnesyl diphosphate. Residue histidine 372 participates in Zn(2+) binding. The segment at 402 to 451 (FEQPSPPINKKSTNVFTISNNNNNNNNKNNNSDDNNNNSNNNNNNSENQL) is disordered. Residues 420-449 (SNNNNNNNNKNNNSDDNNNNSNNNNNNSEN) are compositionally biased toward low complexity.

It belongs to the protein prenyltransferase subunit beta family. As to quaternary structure, heterodimer of fntA and fntB (farnesyltransferase). Heterodimer of an alpha and a beta subunit. The cofactor is Zn(2+).

The catalysed reaction is L-cysteinyl-[protein] + (2E,6E)-farnesyl diphosphate = S-(2E,6E)-farnesyl-L-cysteinyl-[protein] + diphosphate. In terms of biological role, catalyzes the transfer of a farnesyl moiety from farnesyl diphosphate to a cysteine at the fourth position from the C-terminus of several proteins. The beta subunit is responsible for peptide-binding. The protein is Protein farnesyltransferase subunit beta (fntB) of Dictyostelium discoideum (Social amoeba).